The following is a 270-amino-acid chain: Shikimate dehydrogenase (NADP(+)) (270 aa).

Residues Ser-14–Ser-16 and Thr-61 each bind shikimate. Lys-65 functions as the Proton acceptor in the catalytic mechanism. Asp-77 is a binding site for NADP(+). Shikimate contacts are provided by Asn-86 and Asp-101. NADP(+)-binding positions include Gly-125–Ala-129 and Ile-210. Tyr-212 lines the shikimate pocket. Gly-233 is an NADP(+) binding site.

The protein belongs to the shikimate dehydrogenase family. As to quaternary structure, homodimer.

It carries out the reaction shikimate + NADP(+) = 3-dehydroshikimate + NADPH + H(+). It participates in metabolic intermediate biosynthesis; chorismate biosynthesis; chorismate from D-erythrose 4-phosphate and phosphoenolpyruvate: step 4/7. Its function is as follows. Involved in the biosynthesis of the chorismate, which leads to the biosynthesis of aromatic amino acids. Catalyzes the reversible NADPH linked reduction of 3-dehydroshikimate (DHSA) to yield shikimate (SA). The chain is Shikimate dehydrogenase (NADP(+)) from Clostridium beijerinckii (strain ATCC 51743 / NCIMB 8052) (Clostridium acetobutylicum).